Consider the following 291-residue polypeptide: 4-diphosphocytidyl-2-C-methyl-D-erythritol kinase (291 aa).

Residue lysine 8 is part of the active site. Position 89–99 (89–99 (PIGSGIGGGSS)) interacts with ATP. Residue aspartate 131 is part of the active site.

It belongs to the GHMP kinase family. IspE subfamily.

It catalyses the reaction 4-CDP-2-C-methyl-D-erythritol + ATP = 4-CDP-2-C-methyl-D-erythritol 2-phosphate + ADP + H(+). It functions in the pathway isoprenoid biosynthesis; isopentenyl diphosphate biosynthesis via DXP pathway; isopentenyl diphosphate from 1-deoxy-D-xylulose 5-phosphate: step 3/6. Its function is as follows. Catalyzes the phosphorylation of the position 2 hydroxy group of 4-diphosphocytidyl-2C-methyl-D-erythritol. The sequence is that of 4-diphosphocytidyl-2-C-methyl-D-erythritol kinase from Chlamydia abortus (strain DSM 27085 / S26/3) (Chlamydophila abortus).